Reading from the N-terminus, the 27-residue chain is Small integral membrane protein 43 (27 aa).

The segment at 15 to 21 (HREPWGF) is important for interaction with SLC2A1 and SLC2A3.

As to quaternary structure, interacts with glucose transporters SLC2A1/GLUT1 and SLC2A3/GLUT3; the interactions may promote SLC2A1- and SLC2A3-mediated glucose transport to meet the energy needs of mesendoderm differentiation.

The protein resides in the cell membrane. Functionally, required for mesendoderm differentiation. Interacts with glucose transporters and promotes glucose uptake. Probably augments the glucose uptake capacity of glucose transporter proteins to meet the energy needs of mesendoderm differentiation. The chain is Small integral membrane protein 43 from Pongo abelii (Sumatran orangutan).